The following is a 385-amino-acid chain: Neuropeptide Y receptor type 2 (385 aa).

Over 1–54 (MGPLEAIGEENQTDEMKMELFTKLYLPRYTTPVSELALDPKPELKDSTTLVEVQ) the chain is Extracellular. Residue N11 is glycosylated (N-linked (GlcNAc...) asparagine). Residues 55–75 (IILIFAYCSIILLGVIGNSLV) form a helical membrane-spanning segment. Residues 76–90 (IHVIIKFKSMRTVTN) are Cytoplasmic-facing. The chain crosses the membrane as a helical span at residues 91-111 (FFIANLAVADLLVNTLCLPFT). The Extracellular portion of the chain corresponds to 112–128 (LVYTLLGEWKLGPVLCH). An intrachain disulfide couples C127 to C207. Residues 129–149 (LVPYAQALAVHVSTVTLTVIA) traverse the membrane as a helical segment. Residues 150–169 (LDRHRCIVYHLESKISKRIS) lie on the Cytoplasmic side of the membrane. A helical transmembrane segment spans residues 170-190 (FLIIGVAWAVSALLASPLAIF). The Extracellular segment spans residues 191–221 (REYSLIEIIPDFKIVVCSEKWPGEGQLNYGT). Residues 222 to 242 (IYSVSMLLIQYVLPLAIISYA) traverse the membrane as a helical segment. The Cytoplasmic portion of the chain corresponds to 243 to 273 (YTRIWTKLKNHVSPGAGNDHYHHRRQKTTKM). A helical membrane pass occupies residues 274–294 (LVCVVVVFAVSWLPFHAFQLV). At 295-308 (SDIDSQVLDLKEYK) the chain is on the extracellular side. The chain crosses the membrane as a helical span at residues 309–329 (LIYTVFHVIAMCSTFANPLLY). Topologically, residues 330-385 (GWMNNNYRTAFLTAFQCEQRLDSIHPEVSAAFKARKKLEAKKSQFPGDSFTQPTNV) are cytoplasmic. C346 carries S-palmitoyl cysteine lipidation.

It belongs to the G-protein coupled receptor 1 family.

The protein localises to the cell membrane. In terms of biological role, receptor for neuropeptide Y and peptide YY. In Gallus gallus (Chicken), this protein is Neuropeptide Y receptor type 2 (NPY2R).